The sequence spans 294 residues: MSETLQISRVAGTNGAPTHVTVTAQALFQILDHALRREEEQSKVIGTLVGIRSEDGSEVEVRNAYAVPHSESEQEMTIDLEYNPTMLALHRKAFPKEVIVGWYATSSELNTFSGLIHDYYTQLDGTPAIHLTVEAANLADTLLPRTYVASAVGIDPSKNSGNCVFVPISNEVKFNDSADRAALEAISSARESPERSINLTSDLANLENSLTQVLDMLERVQTYVARVISGEESSEKAQQVGKQLLSTLTLTPSLDAQNLEALFNSHLQDVLMVVYLANTVKTQLQLSAKLTTLV.

An MPN domain is found at 20 to 163; that stretch reads VTVTAQALFQ…IDPSKNSGNC (144 aa).

It belongs to the eIF-3 subunit F family. As to quaternary structure, component of the eukaryotic translation initiation factor 3 (eIF-3) complex.

It localises to the cytoplasm. Component of the eukaryotic translation initiation factor 3 (eIF-3) complex, which is involved in protein synthesis of a specialized repertoire of mRNAs and, together with other initiation factors, stimulates binding of mRNA and methionyl-tRNAi to the 40S ribosome. The eIF-3 complex specifically targets and initiates translation of a subset of mRNAs involved in cell proliferation. In Yarrowia lipolytica (strain CLIB 122 / E 150) (Yeast), this protein is Eukaryotic translation initiation factor 3 subunit F.